Here is a 641-residue protein sequence, read N- to C-terminus: Toxin TseL (641 aa).

As to quaternary structure, interacts with VgrG3; this interaction allows TseL secretion to target cells.

It localises to the secreted. Functionally, toxin secreted by the type VI (T6SS) secretion system that acts on prokaryotic as well as eukaryotic target cells. The chain is Toxin TseL from Vibrio cholerae serotype O1 (strain ATCC 39315 / El Tor Inaba N16961).